We begin with the raw amino-acid sequence, 220 residues long: FMN-dependent NADH:quinone oxidoreductase 1 (220 aa).

18 to 20 (SVS) provides a ligand contact to FMN.

It belongs to the azoreductase type 1 family. As to quaternary structure, homodimer. FMN serves as cofactor.

It catalyses the reaction 2 a quinone + NADH + H(+) = 2 a 1,4-benzosemiquinone + NAD(+). The enzyme catalyses N,N-dimethyl-1,4-phenylenediamine + anthranilate + 2 NAD(+) = 2-(4-dimethylaminophenyl)diazenylbenzoate + 2 NADH + 2 H(+). Quinone reductase that provides resistance to thiol-specific stress caused by electrophilic quinones. In terms of biological role, also exhibits azoreductase activity. Catalyzes the reductive cleavage of the azo bond in aromatic azo compounds to the corresponding amines. The chain is FMN-dependent NADH:quinone oxidoreductase 1 from Bacillus anthracis.